Consider the following 488-residue polypeptide: Katanin p60 ATPase-containing subunit A-like 1 (488 aa).

Residues 84–184 (FPNPVPEEGP…EQKKFDGTGY (101 aa)) form a disordered region. Residues 144 to 167 (KPDRPNTRDGRGNKAKEEKSKRNA) show a composition bias toward basic and acidic residues. ATP is bound at residue 246 to 253 (GPPGTGKT).

The protein belongs to the AAA ATPase family. Katanin p60 subunit A1 subfamily. A-like 1 sub-subfamily.

It localises to the cytoplasm. The protein localises to the cytoskeleton. The protein resides in the spindle pole. It is found in the spindle. It carries out the reaction n ATP + n H2O + a microtubule = n ADP + n phosphate + (n+1) alpha/beta tubulin heterodimers.. In terms of biological role, regulates microtubule dynamics in Sertoli cells, a process that is essential for spermiogenesis and male fertility. Severs microtubules in an ATP-dependent manner, promoting rapid reorganization of cellular microtubule arrays. This chain is Katanin p60 ATPase-containing subunit A-like 1 (katnal1), found in Danio rerio (Zebrafish).